The sequence spans 873 residues: Alanine--tRNA ligase (873 aa).

His-562, His-566, Cys-664, and His-668 together coordinate Zn(2+).

This sequence belongs to the class-II aminoacyl-tRNA synthetase family. It depends on Zn(2+) as a cofactor.

It localises to the cytoplasm. It catalyses the reaction tRNA(Ala) + L-alanine + ATP = L-alanyl-tRNA(Ala) + AMP + diphosphate. Catalyzes the attachment of alanine to tRNA(Ala) in a two-step reaction: alanine is first activated by ATP to form Ala-AMP and then transferred to the acceptor end of tRNA(Ala). Also edits incorrectly charged Ser-tRNA(Ala) and Gly-tRNA(Ala) via its editing domain. The polypeptide is Alanine--tRNA ligase (Photobacterium profundum (strain SS9)).